Here is a 72-residue protein sequence, read N- to C-terminus: ATP-dependent Clp protease ATP-binding subunit ClpA homolog (72 aa).

Belongs to the ClpA/ClpB family.

It is found in the plastid. It localises to the chloroplast. Its function is as follows. May interact with a ClpP-like protease involved in degradation of denatured proteins in the chloroplast. In Populus euphratica (Euphrates poplar), this protein is ATP-dependent Clp protease ATP-binding subunit ClpA homolog.